A 169-amino-acid chain; its full sequence is Tumor suppressor ARF (169 aa).

The segment at 1–63 (MGRRFLVTVR…RRGPHRNPGP (63 aa)) is interaction with CDK5RAP3 and MDM2. Positions 54–73 (RRGPHRNPGPGDDDGQRSRS) are disordered.

In terms of assembly, does not interact with cyclins, CDK1, CDK2, CDK4, CDK5 or CDK6. Interacts with COMMD1. Binds to BCL6, E2F1, HUWE1, MDM2, MYC, NPM1/B23, TOP1/TOPOI and UBE2I/UBC9. Interacts with TBRG1. Interacts with CDKN2AIP and E4F1. Interacts with CDK5RAP3 and MDM2; form a ternary complex involved in regulation of p53/TP53. Interacts with NOP53; the interaction is direct and promotes ARF nucleoplasmic relocalization and ubiquitin-mediated proteasomal degradation. Interacts with TTF1 (via the N-terminal region (NRD) and a C-terminal region); the interaction is direct and inhibits the nucleolar localization of TTF1. Interacts with C1QBP. Ubiquitinated in normal cells by TRIP12 via the ubiquitin fusion degradation (UFD) pathway, a process that mediates ubiquitination at the N-terminus, regardless of the absence of lysine residues. Ubiquitination leads to its proteasomal degradation. In cancer cells, however, TRIP12 is located in a different cell compartment, preventing ubiquitination and degradation.

Its subcellular location is the nucleus. It is found in the nucleolus. The protein resides in the nucleoplasm. The protein localises to the mitochondrion. Its function is as follows. Capable of inducing cell cycle arrest in G1 and G2 phases. Acts as a tumor suppressor. Binds to MDM2 and blocks its nucleocytoplasmic shuttling by sequestering it in the nucleolus. This inhibits the oncogenic action of MDM2 by blocking MDM2-induced degradation of p53 and enhancing p53-dependent transactivation and apoptosis. Also induces G2 arrest and apoptosis in a p53-independent manner by preventing the activation of cyclin B1/CDC2 complexes. Binds to BCL6 and down-regulates BCL6-induced transcriptional repression. Binds to E2F1 and MYC and blocks their transcriptional activator activity but has no effect on MYC transcriptional repression. Binds to TOP1/TOPOI and stimulates its activity. This complex binds to rRNA gene promoters and may play a role in rRNA transcription and/or maturation. Interacts with NPM1/B23 and promotes its polyubiquitination and degradation, thus inhibiting rRNA processing. Plays a role in inhibiting ribosome biogenesis, perhaps by binding to the nucleolar localization sequence of transcription termination factor TTF1, and thereby preventing nucleolar localization of TTF1. Interacts with COMMD1 and promotes its 'Lys63'-linked polyubiquitination. Interacts with UBE2I/UBC9 and enhances sumoylation of a number of its binding partners including MDM2 and E2F1. Binds to HUWE1 and represses its ubiquitin ligase activity. May play a role in controlling cell proliferation and apoptosis during mammary gland development. In terms of biological role, may be involved in regulation of autophagy and caspase-independent cell death; the short-lived mitochondrial isoform is stabilized by C1QBP. The sequence is that of Tumor suppressor ARF from Mus musculus (Mouse).